Here is a 956-residue protein sequence, read N- to C-terminus: Probable hypoxanthine oxidase XdhD (956 aa).

Positions 414, 445, and 727 each coordinate Mo-molybdopterin.

It belongs to the xanthine dehydrogenase family. It depends on [2Fe-2S] cluster as a cofactor. Mo-molybdopterin is required as a cofactor.

Probably has no xanthine dehydrogenase activity; however deletion results in increased adenine sensitivity, suggesting that this protein contributes to the conversion of adenine to guanine nucleotides during purine salvage. The chain is Probable hypoxanthine oxidase XdhD (xdhD) from Escherichia coli O157:H7.